Consider the following 393-residue polypeptide: Riboflavin biosynthesis protein RibBA (393 aa).

The interval 1-200 is DHBP synthase; that stretch reads MQFDNIDSAL…IDDLIEYRKK (200 aa). D-ribulose 5-phosphate is bound by residues 27–28, Asp32, 139–143, and Glu163; these read RE and RNGHT. Glu28 is a Mg(2+) binding site. Residue His142 participates in Mg(2+) binding. Residues 201 to 393 are GTP cyclohydrolase II; sequence LEPEIEFKAK…TKKIKMGHLI (193 aa). 249–253 contacts GTP; it reads RLHSA. 3 residues coordinate Zn(2+): Cys254, Cys265, and Cys267. GTP is bound by residues Gln270, 291-293, and Thr313; that span reads EGR. Asp325 acts as the Proton acceptor; for GTP cyclohydrolase activity in catalysis. The active-site Nucleophile; for GTP cyclohydrolase activity is Arg327. Residues Ser348 and Lys353 each contribute to the GTP site.

It in the N-terminal section; belongs to the DHBP synthase family. In the C-terminal section; belongs to the GTP cyclohydrolase II family. Mg(2+) is required as a cofactor. Mn(2+) serves as cofactor. The cofactor is Zn(2+).

It carries out the reaction D-ribulose 5-phosphate = (2S)-2-hydroxy-3-oxobutyl phosphate + formate + H(+). The catalysed reaction is GTP + 4 H2O = 2,5-diamino-6-hydroxy-4-(5-phosphoribosylamino)-pyrimidine + formate + 2 phosphate + 3 H(+). Its pathway is cofactor biosynthesis; riboflavin biosynthesis; 2-hydroxy-3-oxobutyl phosphate from D-ribulose 5-phosphate: step 1/1. The protein operates within cofactor biosynthesis; riboflavin biosynthesis; 5-amino-6-(D-ribitylamino)uracil from GTP: step 1/4. Functionally, catalyzes the conversion of D-ribulose 5-phosphate to formate and 3,4-dihydroxy-2-butanone 4-phosphate. In terms of biological role, catalyzes the conversion of GTP to 2,5-diamino-6-ribosylamino-4(3H)-pyrimidinone 5'-phosphate (DARP), formate and pyrophosphate. The sequence is that of Riboflavin biosynthesis protein RibBA from Staphylococcus aureus (strain Mu50 / ATCC 700699).